We begin with the raw amino-acid sequence, 92 residues long: MNHLQRRQLFLENLLVGVNSTFHQMQKHSISTCCRSLQRILDHLILLQTTHSPVFRLDRMQLRQMQTLACLWIHRHNHDLQVTLDAIKWISP.

Belongs to the rotavirus A NSP6 family. Interacts with NSP2 and NSP5.

The protein resides in the host cytoplasm. The protein localises to the host mitochondrion. The protein is Non-structural protein 6 of Macaca mulatta (Rhesus macaque).